We begin with the raw amino-acid sequence, 373 residues long: tRNA-specific 2-thiouridylase MnmA (373 aa).

Residues 12–19 (GMSGGVDS) and Met-38 each bind ATP. The segment at 98 to 100 (NPD) is interaction with target base in tRNA. The active-site Nucleophile is the Cys-103. Cys-103 and Cys-200 are oxidised to a cystine. Residue Gly-127 participates in ATP binding. Residues 150 to 152 (KDQ) form an interaction with tRNA region. Cys-200 functions as the Cysteine persulfide intermediate in the catalytic mechanism. Residues 312-313 (RY) form an interaction with tRNA region.

It belongs to the MnmA/TRMU family.

It is found in the cytoplasm. It catalyses the reaction S-sulfanyl-L-cysteinyl-[protein] + uridine(34) in tRNA + AH2 + ATP = 2-thiouridine(34) in tRNA + L-cysteinyl-[protein] + A + AMP + diphosphate + H(+). Its function is as follows. Catalyzes the 2-thiolation of uridine at the wobble position (U34) of tRNA, leading to the formation of s(2)U34. The chain is tRNA-specific 2-thiouridylase MnmA from Streptococcus pneumoniae (strain 70585).